The chain runs to 698 residues: Polyphosphate kinase (698 aa).

Asn63 provides a ligand contact to ATP. Residues Arg390 and Arg420 each coordinate Mg(2+). His450 (phosphohistidine intermediate) is an active-site residue. The ATP site is built by Tyr483, Arg579, and His607.

The protein belongs to the polyphosphate kinase 1 (PPK1) family. Mg(2+) serves as cofactor. Post-translationally, an intermediate of this reaction is the autophosphorylated ppk in which a phosphate is covalently linked to a histidine residue through a N-P bond.

The catalysed reaction is [phosphate](n) + ATP = [phosphate](n+1) + ADP. Its function is as follows. Catalyzes the reversible transfer of the terminal phosphate of ATP to form a long-chain polyphosphate (polyP). The chain is Polyphosphate kinase from Xylella fastidiosa (strain 9a5c).